The primary structure comprises 212 residues: Large ribosomal subunit protein uL3 (212 aa).

Residue Q153 is modified to N5-methylglutamine.

It belongs to the universal ribosomal protein uL3 family. As to quaternary structure, part of the 50S ribosomal subunit. Forms a cluster with proteins L14 and L19. In terms of processing, methylated by PrmB.

Its function is as follows. One of the primary rRNA binding proteins, it binds directly near the 3'-end of the 23S rRNA, where it nucleates assembly of the 50S subunit. The polypeptide is Large ribosomal subunit protein uL3 (Acinetobacter baylyi (strain ATCC 33305 / BD413 / ADP1)).